The sequence spans 110 residues: Putative anti-sigma factor antagonist TM_1442 (110 aa).

The region spanning 4-110 (LKLDIVEQDD…FKITDTVEEA (107 aa)) is the STAS domain. A Phosphoserine modification is found at serine 59.

Belongs to the anti-sigma-factor antagonist family. Phosphorylated on a serine residue.

In the phosphorylated form it could act as an anti-anti-sigma factor that counteracts an anti-sigma factor and thus releases a sigma factor from inhibition. This is Putative anti-sigma factor antagonist TM_1442 from Thermotoga maritima (strain ATCC 43589 / DSM 3109 / JCM 10099 / NBRC 100826 / MSB8).